The chain runs to 332 residues: uncharacterized protein (332 aa).

The signal sequence occupies residues 1 to 26; the sequence is MSSLGKLLKLTLLGILLSFSCKFVFG.

Its subcellular location is the endoplasmic reticulum. This is an uncharacterized protein from Schizosaccharomyces pombe (strain 972 / ATCC 24843) (Fission yeast).